We begin with the raw amino-acid sequence, 432 residues long: Adenylosuccinate synthetase (432 aa).

Residues 13–19 (GDEGKGK) and 41–43 (GHT) each bind GTP. Asp14 acts as the Proton acceptor in catalysis. Residues Asp14 and Gly41 each contribute to the Mg(2+) site. Residues 14–17 (DEGK), 39–42 (NAGH), Thr130, Arg144, Gln225, Thr240, and Arg304 contribute to the IMP site. His42 serves as the catalytic Proton donor. 300–306 (AVTGRPR) contacts substrate. Residues Arg306, 332 to 334 (KLD), and 415 to 417 (STG) each bind GTP.

Belongs to the adenylosuccinate synthetase family. As to quaternary structure, homodimer. It depends on Mg(2+) as a cofactor.

The protein localises to the cytoplasm. The catalysed reaction is IMP + L-aspartate + GTP = N(6)-(1,2-dicarboxyethyl)-AMP + GDP + phosphate + 2 H(+). It participates in purine metabolism; AMP biosynthesis via de novo pathway; AMP from IMP: step 1/2. In terms of biological role, plays an important role in the de novo pathway of purine nucleotide biosynthesis. Catalyzes the first committed step in the biosynthesis of AMP from IMP. The protein is Adenylosuccinate synthetase of Actinobacillus pleuropneumoniae serotype 3 (strain JL03).